Here is a 259-residue protein sequence, read N- to C-terminus: Nuclear egress protein 1 (259 aa).

A CCCH-type zinc finger spans residues Cys80–His184.

It belongs to the herpesviridae NEC1 protein family. Forms a heterohexameric complex with NEC2. Interacts with capsid vertex specific component 2/CVC2; this interaction directs the capsid to the host inner nuclear membrane to initiate budding. In terms of processing, phosphorylated at serine residues in the N-terminus. This phosphorylation regulates the localization within the inner nuclear membrane.

The protein resides in the host nucleus inner membrane. In terms of biological role, plays an essential role in virion nuclear egress, the first step of virion release from infected cell. Within the host nucleus, NEC1 interacts with the newly formed capsid through the vertexes and directs it to the inner nuclear membrane by associating with NEC2. Induces the budding of the capsid at the inner nuclear membrane as well as its envelopment into the perinuclear space. There, the NEC1/NEC2 complex promotes the fusion of the enveloped capsid with the outer nuclear membrane and the subsequent release of the viral capsid into the cytoplasm where it will reach the secondary budding sites in the host Golgi or trans-Golgi network. This is Nuclear egress protein 1 from Homo sapiens (Human).